The chain runs to 509 residues: Photosystem II CP47 reaction center protein (509 aa).

Transmembrane regions (helical) follow at residues 21–36, 101–115, 140–156, 203–218, 237–252, and 457–472; these read SVHL…WAGS, IVLS…IWHW, GIHL…FGAF, IAAG…FHLN, VLSS…SFVV, and NFAL…HGSR.

The protein belongs to the PsbB/PsbC family. PsbB subfamily. PSII is composed of 1 copy each of membrane proteins PsbA, PsbB, PsbC, PsbD, PsbE, PsbF, PsbH, PsbI, PsbJ, PsbK, PsbL, PsbM, PsbT, PsbY, PsbZ, Psb30/Ycf12, at least 3 peripheral proteins of the oxygen-evolving complex and a large number of cofactors. It forms dimeric complexes. Requires Binds multiple chlorophylls. PSII binds additional chlorophylls, carotenoids and specific lipids. as cofactor.

Its subcellular location is the plastid. It localises to the chloroplast thylakoid membrane. In terms of biological role, one of the components of the core complex of photosystem II (PSII). It binds chlorophyll and helps catalyze the primary light-induced photochemical processes of PSII. PSII is a light-driven water:plastoquinone oxidoreductase, using light energy to abstract electrons from H(2)O, generating O(2) and a proton gradient subsequently used for ATP formation. This Cyanidium caldarium (Red alga) protein is Photosystem II CP47 reaction center protein.